Consider the following 145-residue polypeptide: Arginine repressor (145 aa).

This sequence belongs to the ArgR family.

Its subcellular location is the cytoplasm. It functions in the pathway amino-acid biosynthesis; L-arginine biosynthesis [regulation]. Its function is as follows. Regulates arginine biosynthesis genes. The sequence is that of Arginine repressor from Streptococcus mutans serotype c (strain ATCC 700610 / UA159).